A 1331-amino-acid polypeptide reads, in one-letter code: Receptor-type adenylate cyclase B (1331 aa).

Topologically, residues 1-33 (MYADATHPRRACWCGAGGVSGCVRQRHAYRCSR) are cytoplasmic. The chain crosses the membrane as a helical span at residues 34-54 (LLAGVLLIVGALTLTLAVSTV). Topologically, residues 55-898 (PAAWAAGAVA…SHALTPAQRG (844 aa)) are extracellular. Asparagine 255, asparagine 429, asparagine 558, asparagine 574, and asparagine 657 each carry an N-linked (GlcNAc...) asparagine glycan. A helical membrane pass occupies residues 899–919 (GAIAGIALLTVILLAVAGLAL). Over 920–1331 (YCCMDNRNND…PTVCNVRGAH (412 aa)) the chain is Cytoplasmic. Positions 940 to 1094 (TLLFTDIESS…DTSNMAARTE (155 aa)) constitute a Guanylate cyclase domain. 2 residues coordinate Mg(2+): aspartate 945 and aspartate 988.

This sequence belongs to the adenylyl cyclase class-3 family. It depends on Mg(2+) as a cofactor.

The protein localises to the membrane. The catalysed reaction is ATP = 3',5'-cyclic AMP + diphosphate. Could act as a receptor for an unknown ligand. In Leishmania donovani, this protein is Receptor-type adenylate cyclase B (RAC-B).